A 572-amino-acid chain; its full sequence is Phosphoenolpyruvate-protein phosphotransferase (572 aa).

The active-site Tele-phosphohistidine intermediate is histidine 190. Phosphoenolpyruvate is bound by residues arginine 297 and arginine 333. Mg(2+) is bound by residues glutamate 432 and aspartate 456. Phosphoenolpyruvate contacts are provided by residues 455–456 (ND) and arginine 466. Residue cysteine 503 is the Proton donor of the active site.

Belongs to the PEP-utilizing enzyme family. As to quaternary structure, homodimer. Mg(2+) serves as cofactor.

It is found in the cytoplasm. The enzyme catalyses L-histidyl-[protein] + phosphoenolpyruvate = N(pros)-phospho-L-histidyl-[protein] + pyruvate. Functionally, general (non sugar-specific) component of the phosphoenolpyruvate-dependent sugar phosphotransferase system (sugar PTS). This major carbohydrate active-transport system catalyzes the phosphorylation of incoming sugar substrates concomitantly with their translocation across the cell membrane. Enzyme I transfers the phosphoryl group from phosphoenolpyruvate (PEP) to the phosphoryl carrier protein (HPr). The polypeptide is Phosphoenolpyruvate-protein phosphotransferase (ptsI) (Listeria innocua serovar 6a (strain ATCC BAA-680 / CLIP 11262)).